Consider the following 361-residue polypeptide: 3-dehydroquinate synthase (361 aa).

This sequence belongs to the archaeal-type DHQ synthase family.

It catalyses the reaction 2-amino-2,3,7-trideoxy-D-lyxo-hept-6-ulosonate + NAD(+) + H2O = 3-dehydroquinate + NH4(+) + NADH + H(+). In terms of biological role, catalyzes the oxidative deamination and cyclization of 2-amino-3,7-dideoxy-D-threo-hept-6-ulosonic acid (ADH) to yield 3-dehydroquinate (DHQ), which is fed into the canonical shikimic pathway of aromatic amino acid biosynthesis. This chain is 3-dehydroquinate synthase, found in Methanococcus maripaludis (strain C7 / ATCC BAA-1331).